Here is a 253-residue protein sequence, read N- to C-terminus: MLLYKEKMKLLIKTSLSQWICLNFAKIPIFKMLGFITALFITACSSISKEPVKTVDIYIKPYYSAENGKAENVFVHKEIDPMLRENTIKGYKSAVKFVEENPARISPMTMFTLAARAYDFGLRDEAVTWFYRGQNRLITALYVLDLPKQTVQDNTGFSHVVGQFVNAYAFCNFDKQSLAAENAMKWTVAHPYEVVFLPALPAKFADRQKALKEAEEKLVQRLQEQARFFANPKNKEKWQKERSENFVNERFCW.

This is an uncharacterized protein from Haemophilus influenzae (strain ATCC 51907 / DSM 11121 / KW20 / Rd).